The following is a 573-amino-acid chain: 60 kDa heat shock protein, mitochondrial (573 aa).

The N-terminal 26 residues, 1 to 26 (MLRLPTVLRQMRPVSRALAPHLTRAY), are a transit peptide targeting the mitochondrion. An N6-succinyllysine modification is found at Lys-31. Residues Ser-67 and Ser-70 each carry the phosphoserine modification. Lys-75 serves as a coordination point for ATP. At Lys-75 the chain carries N6-acetyllysine. Lys-82 carries the N6-acetyllysine; alternate modification. Residue Lys-82 is modified to N6-succinyllysine; alternate. Lys-87 is subject to N6-acetyllysine. Tyr-90 bears the Phosphotyrosine mark. Lys-91 carries the post-translational modification N6-acetyllysine. An ATP-binding site is contributed by 111–115 (DGTTT). Position 125 is an N6-acetyllysine; alternate (Lys-125). Residue Lys-125 is modified to N6-succinyllysine; alternate. N6-acetyllysine is present on Lys-130. An N6-acetyllysine; alternate modification is found at Lys-133. Lys-133 carries the N6-succinyllysine; alternate modification. Lys-133 bears the N6-malonyllysine; alternate mark. At Lys-156 the chain carries N6-acetyllysine. An N6-acetyllysine; alternate mark is found at Lys-191, Lys-202, Lys-205, Lys-218, and Lys-236. 5 positions are modified to N6-succinyllysine; alternate: Lys-191, Lys-202, Lys-205, Lys-218, and Lys-236. At Lys-249 the chain carries N6-acetyllysine. At Lys-250 the chain carries N6-acetyllysine; alternate. At Lys-250 the chain carries N6-succinyllysine; alternate. Residues Lys-269 and Lys-292 each carry the N6-acetyllysine modification. Lys-301 is subject to N6-succinyllysine. The residue at position 314 (Lys-314) is an N6-acetyllysine. Residue Lys-352 is modified to N6-acetyllysine; alternate. Lys-352 bears the N6-succinyllysine; alternate mark. N6-acetyllysine occurs at positions 359 and 389. At Lys-396 the chain carries N6-acetyllysine; alternate. Lys-396 is modified (N6-succinyllysine; alternate). Ser-410 is modified (phosphoserine). Gly-440 contacts ATP. Lys-455 is subject to N6-acetyllysine; alternate. At Lys-455 the chain carries N6-succinyllysine; alternate. An N6-acetyllysine modification is found at Lys-469. The residue at position 481 (Lys-481) is an N6-acetyllysine; alternate. Position 481 is an N6-succinyllysine; alternate (Lys-481). The residue at position 488 (Ser-488) is a Phosphoserine. Asp-520 is a binding site for ATP. Residue Lys-551 forms a Glycyl lysine isopeptide (Lys-Gly) (interchain with G-Cter in SUMO2) linkage.

It belongs to the chaperonin (HSP60) family. As to quaternary structure, homoheptamer arranged in a ring structure. The functional units of these chaperonins consist of heptameric rings of the large subunit Hsp60, which function as a back-to-back double ring. Interacts with 2 heptameric Hsp10 rings to form the symmetrical football complex. Interacts with HRAS. Interacts with ATAD3A. Interacts with ETFBKMT and EEF1AKMT3. Interacts with MFHAS1.

The protein localises to the mitochondrion matrix. It catalyses the reaction ATP + H2O + a folded polypeptide = ADP + phosphate + an unfolded polypeptide.. In terms of biological role, chaperonin implicated in mitochondrial protein import and macromolecular assembly. Together with Hsp10, facilitates the correct folding of imported proteins. May also prevent misfolding and promote the refolding and proper assembly of unfolded polypeptides generated under stress conditions in the mitochondrial matrix. The functional units of these chaperonins consist of heptameric rings of the large subunit Hsp60, which function as a back-to-back double ring. In a cyclic reaction, Hsp60 ring complexes bind one unfolded substrate protein per ring, followed by the binding of ATP and association with 2 heptameric rings of the co-chaperonin Hsp10. This leads to sequestration of the substrate protein in the inner cavity of Hsp60 where, for a certain period of time, it can fold undisturbed by other cell components. Synchronous hydrolysis of ATP in all Hsp60 subunits results in the dissociation of the chaperonin rings and the release of ADP and the folded substrate protein. This Rattus norvegicus (Rat) protein is 60 kDa heat shock protein, mitochondrial (Hspd1).